A 369-amino-acid polypeptide reads, in one-letter code: Anhydro-N-acetylmuramic acid kinase (369 aa).

Residue 12 to 19 participates in ATP binding; the sequence is GTSLDGVD.

The protein belongs to the anhydro-N-acetylmuramic acid kinase family.

It catalyses the reaction 1,6-anhydro-N-acetyl-beta-muramate + ATP + H2O = N-acetyl-D-muramate 6-phosphate + ADP + H(+). It participates in amino-sugar metabolism; 1,6-anhydro-N-acetylmuramate degradation. It functions in the pathway cell wall biogenesis; peptidoglycan recycling. Functionally, catalyzes the specific phosphorylation of 1,6-anhydro-N-acetylmuramic acid (anhMurNAc) with the simultaneous cleavage of the 1,6-anhydro ring, generating MurNAc-6-P. Is required for the utilization of anhMurNAc either imported from the medium or derived from its own cell wall murein, and thus plays a role in cell wall recycling. In Actinobacillus pleuropneumoniae serotype 5b (strain L20), this protein is Anhydro-N-acetylmuramic acid kinase.